The chain runs to 184 residues: Lactoylglutathione lyase (184 aa).

Ala-2 is subject to N-acetylalanine. Cys-19 and Cys-20 are joined by a disulfide. A VOC domain is found at 31-177 (LLQQTMLRIK…DGYWIEILNP (147 aa)). Substrate is bound by residues Gln-34 and Arg-38. Gln-34 provides a ligand contact to Zn(2+). Zn(2+) is bound at residue Glu-100. Asn-104 provides a ligand contact to substrate. Thr-107 is modified (phosphothreonine). Substrate is bound by residues Arg-123 and His-127. His-127 is a binding site for Zn(2+). Residue Cys-139 is modified to S-glutathionyl cysteine. Lys-148 carries the post-translational modification N6-acetyllysine; alternate. The residue at position 148 (Lys-148) is an N6-succinyllysine; alternate. A substrate-binding site is contributed by 157-158 (KM). Glu-173 contributes to the Zn(2+) binding site. Glu-173 acts as the Proton donor/acceptor in catalysis.

This sequence belongs to the glyoxalase I family. As to quaternary structure, homodimer. The cofactor is Zn(2+). In terms of processing, glutathionylation at Cys-139 inhibits enzyme activity. Phosphorylated at Thr-107 in the presence of CaMK2. However, this is a consensus site for phosphorylation by CK2 so phosphorylation may be mediated by CK2 rather than CaMK2. Phosphorylation is induced by TNF and suppresses the TNF-induced transcriptional activity of NF-kappa-B. Post-translationally, exists in a nitric oxide (NO)-modified form. The exact nature of the modification is unknown, but it suppresses the TNF-induced transcriptional activity of NF-kappa-B.

The enzyme catalyses (R)-S-lactoylglutathione = methylglyoxal + glutathione. Its pathway is secondary metabolite metabolism; methylglyoxal degradation; (R)-lactate from methylglyoxal: step 1/2. Functionally, catalyzes the conversion of hemimercaptal, formed from methylglyoxal and glutathione, to S-lactoylglutathione. Involved in the regulation of TNF-induced transcriptional activity of NF-kappa-B. Required for normal osteoclastogenesis. In Rattus norvegicus (Rat), this protein is Lactoylglutathione lyase (Glo1).